We begin with the raw amino-acid sequence, 304 residues long: ATP phosphoribosyltransferase (304 aa).

It belongs to the ATP phosphoribosyltransferase family. Long subfamily. Requires Mg(2+) as cofactor.

The protein localises to the cytoplasm. It carries out the reaction 1-(5-phospho-beta-D-ribosyl)-ATP + diphosphate = 5-phospho-alpha-D-ribose 1-diphosphate + ATP. Its pathway is amino-acid biosynthesis; L-histidine biosynthesis; L-histidine from 5-phospho-alpha-D-ribose 1-diphosphate: step 1/9. Feedback inhibited by histidine. In terms of biological role, catalyzes the condensation of ATP and 5-phosphoribose 1-diphosphate to form N'-(5'-phosphoribosyl)-ATP (PR-ATP). Has a crucial role in the pathway because the rate of histidine biosynthesis seems to be controlled primarily by regulation of HisG enzymatic activity. In Xylella fastidiosa (strain M12), this protein is ATP phosphoribosyltransferase.